The following is an 894-amino-acid chain: Myb-like protein K (894 aa).

A compositionally biased stretch (low complexity) spans 93–139 (LQQQQQSPVTNVATNTPPTLQHSISSPSPNNFNNNNNANNQFLSPNS). 4 disordered regions span residues 93 to 221 (LQQQ…SASS), 299 to 353 (QVGN…QPIT), 492 to 539 (QQQQ…LEMI), and 601 to 659 (AATT…HWTS). Over residues 140-149 (PQVAKSSPSQ) the composition is skewed to polar residues. The span at 150–221 (NNPSTPIANT…SQSLNSSASS (72 aa)) shows a compositional bias: low complexity. Over residues 300–309 (VGNPMQQSND) the composition is skewed to polar residues. Low complexity-rich tracts occupy residues 310–353 (MQPQ…QPIT) and 492–527 (QQQQ…PQQM). Basic and acidic residues-rich tracts occupy residues 611–640 (GKEE…SKKD) and 649–659 (ASKEKTSHWTS). The HTH myb-type domain occupies 649-704 (ASKEKTSHWTSEEHNKFLEAVQQFGIKDYHAIAKFVQTRNHHQVRTHVNTYLKNQK). Positions 677-700 (YHAIAKFVQTRNHHQVRTHVNTYL) form a DNA-binding region, H-T-H motif. A disordered region spans residues 703-852 (QKKAEAATSS…EYNSGFDSNS (150 aa)). Composition is skewed to low complexity over residues 710–742 (TSST…QPPI), 751–805 (QQQQ…QQPQ), and 815–845 (PPNN…NEYN).

The protein resides in the nucleus. The polypeptide is Myb-like protein K (mybK) (Dictyostelium discoideum (Social amoeba)).